A 205-amino-acid chain; its full sequence is Guanylate kinase (205 aa).

A Guanylate kinase-like domain is found at 6 to 184 (GLLLVVSGPS…SAKEIEGIIS (179 aa)). 13–20 (GPSGAGKG) is a binding site for ATP.

This sequence belongs to the guanylate kinase family.

Its subcellular location is the cytoplasm. The enzyme catalyses GMP + ATP = GDP + ADP. Its function is as follows. Essential for recycling GMP and indirectly, cGMP. In Clostridioides difficile (strain 630) (Peptoclostridium difficile), this protein is Guanylate kinase.